The chain runs to 417 residues: Phosphoglycerate kinase, cytosolic (417 aa).

The (2R)-3-phosphoglycerate site is built by V23, D24, F25, N26, R39, S61, H62, G64, R65, R132, H168, and R169. ADP contacts are provided by G214 and A215. Residue G214 participates in CDP binding. Residues A215 and K216 each coordinate AMP. A215 is an ATP binding site. A215 lines the Mg(2+) pocket. Residue K216 participates in (2R)-3-phosphoglycerate binding. CDP is bound at residue D219. D219 provides a ligand contact to Mg(2+). ADP contacts are provided by K220 and G238. Residue K220 participates in AMP binding. Residue K220 coordinates ATP. G238 contacts CDP. 2 residues coordinate AMP: A239 and A311. Residues A239 and A311 each contribute to the ATP site. ADP is bound by residues A311 and N335. Residues G336 and F341 each coordinate CDP. ADP-binding residues include F341, E342, D374, and T375. Residue E342 participates in AMP binding. 3 residues coordinate ATP: E342, D374, and T375. D374 lines the Mg(2+) pocket.

Belongs to the phosphoglycerate kinase family. As to quaternary structure, monomer. The cofactor is Mg(2+).

The protein localises to the cytoplasm. It catalyses the reaction (2R)-3-phosphoglycerate + ATP = (2R)-3-phospho-glyceroyl phosphate + ADP. It functions in the pathway carbohydrate degradation; glycolysis; pyruvate from D-glyceraldehyde 3-phosphate: step 2/5. This Crithidia fasciculata protein is Phosphoglycerate kinase, cytosolic (PGKB).